Consider the following 100-residue polypeptide: Small ribosomal subunit protein bS18c (100 aa).

Belongs to the bacterial ribosomal protein bS18 family. As to quaternary structure, part of the 30S ribosomal subunit.

It localises to the plastid. Its subcellular location is the chloroplast. The sequence is that of Small ribosomal subunit protein bS18c from Pleurastrum terricola (Filamentous green alga).